The primary structure comprises 366 residues: Glutamate 5-kinase (366 aa).

ATP is bound at residue K17. Residues S57, D144, and N156 each contribute to the substrate site. Residues 176-177 and 216-222 each bind ATP; these read SD and TGGMASK. In terms of domain architecture, PUA spans 278–352; sequence RGALVLDDGA…GRSTTELPDT (75 aa).

This sequence belongs to the glutamate 5-kinase family.

It is found in the cytoplasm. The catalysed reaction is L-glutamate + ATP = L-glutamyl 5-phosphate + ADP. It participates in amino-acid biosynthesis; L-proline biosynthesis; L-glutamate 5-semialdehyde from L-glutamate: step 1/2. In terms of biological role, catalyzes the transfer of a phosphate group to glutamate to form L-glutamate 5-phosphate. In Nocardia farcinica (strain IFM 10152), this protein is Glutamate 5-kinase.